The following is a 243-amino-acid chain: Toxin CcTX-1 (243 aa).

Over residues 1-25 the composition is skewed to basic and acidic residues; sequence SSPEKKNDMSKPGRMRFDNKKEPRS. Residues 1 to 48 are disordered; that stretch reads SSPEKKNDMSKPGRMRFDNKKEPRSSAKNSGNGYGCVDVNAGREPLTG.

Post-translationally, contains disulfide bonds. Nematocytes.

Its subcellular location is the secreted. It is found in the nematocyst. The protein localises to the target cell membrane. Has potent hemolytic activity. Is lethal to crayfish. Causes cutaneous inflammation in humans. May act as a pore-forming toxin, disrupting normal transmembrane ion concentration gradients in susceptible cells. The sequence is that of Toxin CcTX-1 from Cyanea capillata (Lion's mane jellyfish).